We begin with the raw amino-acid sequence, 308 residues long: Protein translocase subunit SecF (308 aa).

The next 6 membrane-spanning stretches (helical) occupy residues 18-38 (AYVFSGVLILLSLVSLVTRGL), 134-154 (GAIYSILGALLVIFVYILIRF), 160-180 (LGAVVALFHDVLITLGLFSLL), 193-213 (TIIAAFLTIVGYSLNDTVVVF), 244-264 (IITSGTTLLVVVILFIFGGEV), and 272-292 (LIVGIVIGTYSSIFVASPVVI).

This sequence belongs to the SecD/SecF family. SecF subfamily. Forms a complex with SecD. Part of the essential Sec protein translocation apparatus which comprises SecA, SecYEG and auxiliary proteins SecDF. Other proteins may also be involved.

Its subcellular location is the cell inner membrane. Functionally, part of the Sec protein translocase complex. Interacts with the SecYEG preprotein conducting channel. SecDF uses the proton motive force (PMF) to complete protein translocation after the ATP-dependent function of SecA. This is Protein translocase subunit SecF from Rhodothermus marinus (strain ATCC 43812 / DSM 4252 / R-10) (Rhodothermus obamensis).